A 291-amino-acid polypeptide reads, in one-letter code: 33 kDa chaperonin (291 aa).

Intrachain disulfides connect C229–C231 and C262–C265.

This sequence belongs to the HSP33 family. Post-translationally, under oxidizing conditions two disulfide bonds are formed involving the reactive cysteines. Under reducing conditions zinc is bound to the reactive cysteines and the protein is inactive.

It is found in the cytoplasm. Its function is as follows. Redox regulated molecular chaperone. Protects both thermally unfolding and oxidatively damaged proteins from irreversible aggregation. Plays an important role in the bacterial defense system toward oxidative stress. This is 33 kDa chaperonin from Aliivibrio salmonicida (strain LFI1238) (Vibrio salmonicida (strain LFI1238)).